We begin with the raw amino-acid sequence, 238 residues long: Ribitol-5-phosphate cytidylyltransferase (238 aa).

CTP is bound by residues 7–10 (FAGG) and 80–86 (GETGQES).

Belongs to the IspD/TarI cytidylyltransferase family. TarI subfamily.

It carries out the reaction D-ribitol 5-phosphate + CTP + H(+) = CDP-L-ribitol + diphosphate. Functionally, catalyzes the transfer of the cytidylyl group of CTP to D-ribitol 5-phosphate. The protein is Ribitol-5-phosphate cytidylyltransferase of Vibrio parahaemolyticus serotype O3:K6 (strain RIMD 2210633).